We begin with the raw amino-acid sequence, 939 residues long: MSAQLRAAAAITPAARRVISGPAAVRRFHHYHHLPTGGIQRVEIAARGLRRSVQFPALANAYHNNAVIVRNASFTRLLPKLALKFIRVPALFGGMMLGAVGWVQYQAIKVSNSAQEFYGNIKATVADTAFSVWSSAVDIAEQTKRGWENTKNQFEIPEWLDRIMKGEGLAGEGSGSGEGGPNGGPEPPRQSRAGAATVAGASATVYGYGASDNDDRTPEEIMRDDNMMFITKKMIEIRNLLQKVGQGSTVTLPSIVVIGSQSSGKSSVLEAIVGHEFLPKGSNMITRRPIELTLVNDPEAKVDYGEFPDLGLARVTDFSLIQKTLTELNQSVPESECVTDDPIRLTIHSPNIPDLSLIDLPGYIQVAGENQPRELKRKITELCDKYIRGPNIILAISAADTDLANSTALQASRRVDPRGERTIGVITKMDLVEPEKGAAILSDRQYPLKLGYVGVISKLPPQSGLFRRDTGNLLASINRNEKNYFGSHPTEFGPDSGVSTGVMTLRKKLLQVLEQQMSSKLNETTEAIQRELEETTYQFKVQYNEQPMSAESYLAASLDDFKHQFHEFASSFGRPQLQTLLKDALDQKVLDQLAARYWNRPIEDLSPAPREPDNIIDLPKADPDSPYWHRQLDTACSGLTRLGVGRLAATVAASAIQQHVEKLLDKSSFAKHPSARKVISDAAATVLADRSYATSDGIEISLKPYKFDPDIQPNEWAQGREHVVGVLQAELEQCQAAMKALENSVGGRKKLKEVMSFVDKARKGEIIVEGDHPSGAGGFSAALLARGREAVFLRDRADILSLRIQAAKSRQCKTLTNKYYCPEVFLDAVATKLAQTAVLFLNVEMLNDFYVRFPREVEAKLHEHMHAGGGLEKFAREDPKVRRHLDLIRRKELLETVLGKIEELHRISSGTAGTLGLRGAGDLKKRIGAPSSSGRRSFF.

A mitochondrion-targeting transit peptide spans 1-27 (MSAQLRAAAAITPAARRVISGPAAVRR). Residues 85-103 (FIRVPALFGGMMLGAVGWV) traverse the membrane as a helical segment. Positions 170–183 (AGEGSGSGEGGPNG) are enriched in gly residues. The disordered stretch occupies residues 170-196 (AGEGSGSGEGGPNGGPEPPRQSRAGAA). Residues 249–522 (TVTLPSIVVI…LEQQMSSKLN (274 aa)) enclose the Dynamin-type G domain. Residues 259 to 266 (GSQSSGKS) are G1 motif. S262, G264, K265, S266, S267, and G281 together coordinate GTP. Residue S266 coordinates Mg(2+). Positions 285–287 (ITR) are G2 motif. Residues T286 and D359 each coordinate Mg(2+). The G3 motif stretch occupies residues 359-362 (DLPG). A G4 motif region spans residues 427–430 (TKMD). Positions 428, 430, and 457 each coordinate GTP. Residues 456-459 (ISKL) are G5 motif. Residues 549–703 (SAESYLAASL…TSDGIEISLK (155 aa)) form a stalk region region. Positions 710–809 (DIQPNEWAQG…LSLRIQAAKS (100 aa)) are paddle region. Residues 810–877 (RQCKTLTNKY…GGGLEKFARE (68 aa)) are stalk region. C812 and C821 form a disulfide bridge. Positions 815 to 909 (LTNKYYCPEV…KIEELHRISS (95 aa)) constitute a GED domain.

It belongs to the TRAFAC class dynamin-like GTPase superfamily. Dynamin/Fzo/YdjA family. As to quaternary structure, oligomeric complex consisting of membrane-bound and soluble forms of MGM1. In terms of processing, cleavage of the transit peptide by mitochondrial processing protease (MPP) produces a long integral membrane form of MGM1 (L-MGM1). Further processing by the rhomboid protease PCP1 produces a short peripheral membrane form of MGM1 (S-MGM1). Both forms are required for full activity.

It localises to the mitochondrion inner membrane. It is found in the mitochondrion intermembrane space. It carries out the reaction GTP + H2O = GDP + phosphate + H(+). Dynamin-related GTPase that is essential for normal mitochondrial morphology by mediating fusion of the mitochondrial inner membranes, regulating cristae morphology and maintaining respiratory chain function. Exists in two forms: the transmembrane, long form (Dynamin-like GTPase MGM1, long form; L-MGM1), which is tethered to the inner mitochondrial membrane, and the short soluble form (Dynamin-like GTPase MGM1, short form; S-MGM1), which results from proteolytic cleavage and localizes in the intermembrane space. Both forms (L-MGM1 and S-MGM1) cooperate to catalyze the fusion of the mitochondrial inner membrane. The equilibrium between L-MGM1 and S-MGM1 is essential: excess levels of S-MGM1, following loss of mitochondrial membrane potential, lead to an impaired equilibrium between L-MGM1 and S-MGM1, inhibiting mitochondrial fusion. Plays a role in the maintenance and remodeling of mitochondrial cristae, some invaginations of the mitochondrial inner membrane that provide an increase in the surface area. Probably acts by forming helical filaments at the inside of inner membrane tubes with the shape and dimensions of crista junctions. Its function is as follows. Constitutes the transmembrane long form (L-MGM1) that plays a central role in mitochondrial inner membrane fusion and cristae morphology. L-MGM1 and the soluble short form (S-MGM1) form higher-order helical assemblies that coordinate the fusion of mitochondrial inner membranes. Inner membrane-anchored L-MGM1 molecules initiate membrane remodeling by recruiting soluble S-MGM1 to rapidly polymerize into a flexible cylindrical scaffold encaging the mitochondrial inner membrane. Once at the membrane surface, the formation of S-MGM1 helices induce bilayer curvature. MGM1 dimerization through the paddle region, which inserts into cardiolipin-containing membrane, promotes GTP hydrolysis and the helical assembly of a flexible MGM1 lattice on the membrane, which drives membrane curvature and mitochondrial fusion. Functionally, constitutes the soluble short form (S-MGM1) generated by cleavage by PCP1, which plays a central role in mitochondrial inner membrane fusion and cristae morphology. The transmembrane long form (L-MGM1) and the S-MGM1 form higher-order helical assemblies that coordinate the fusion of mitochondrial inner membranes. Inner membrane-anchored L-MGM1 molecules initiate membrane remodeling by recruiting soluble S-MGM1 to rapidly polymerize into a flexible cylindrical scaffold encaging the mitochondrial inner membrane. Once at the membrane surface, the formation of S-MGM1 helices induce bilayer curvature. MGM1 dimerization through the paddle region, which inserts into cardiolipin-containing membrane, promotes GTP hydrolysis and the helical assembly of a flexible MGM1 lattice on the membrane, which drives membrane curvature and mitochondrial fusion. Excess levels of S-MGM1 produced by cleavage by PCP1 following stress conditions that induce loss of mitochondrial membrane potential, lead to an impaired equilibrium between L-MGM1 and S-MGM1, thereby inhibiting mitochondrial fusion. The chain is Dynamin-like GTPase MGM1, mitochondrial from Chaetomium thermophilum (strain DSM 1495 / CBS 144.50 / IMI 039719) (Thermochaetoides thermophila).